A 202-amino-acid chain; its full sequence is NADH-quinone oxidoreductase subunit B 2 (202 aa).

C38, C39, C104, and C133 together coordinate [4Fe-4S] cluster.

This sequence belongs to the complex I 20 kDa subunit family. In terms of assembly, NDH-1 is composed of 14 different subunits. Subunits NuoB, C, D, E, F, and G constitute the peripheral sector of the complex. [4Fe-4S] cluster is required as a cofactor.

It is found in the cell inner membrane. It carries out the reaction a quinone + NADH + 5 H(+)(in) = a quinol + NAD(+) + 4 H(+)(out). In terms of biological role, NDH-1 shuttles electrons from NADH, via FMN and iron-sulfur (Fe-S) centers, to quinones in the respiratory chain. The immediate electron acceptor for the enzyme in this species is believed to be ubiquinone. Couples the redox reaction to proton translocation (for every two electrons transferred, four hydrogen ions are translocated across the cytoplasmic membrane), and thus conserves the redox energy in a proton gradient. This is NADH-quinone oxidoreductase subunit B 2 from Koribacter versatilis (strain Ellin345).